Reading from the N-terminus, the 126-residue chain is Holo-[acyl-carrier-protein] synthase (126 aa).

The Mg(2+) site is built by Asp-9 and Glu-58.

The protein belongs to the P-Pant transferase superfamily. AcpS family. Requires Mg(2+) as cofactor.

It localises to the cytoplasm. It catalyses the reaction apo-[ACP] + CoA = holo-[ACP] + adenosine 3',5'-bisphosphate + H(+). In terms of biological role, transfers the 4'-phosphopantetheine moiety from coenzyme A to a Ser of acyl-carrier-protein. The protein is Holo-[acyl-carrier-protein] synthase of Edwardsiella ictaluri (strain 93-146).